The chain runs to 146 residues: Ribonuclease P protein component (146 aa).

Belongs to the RnpA family. As to quaternary structure, consists of a catalytic RNA component (M1 or rnpB) and a protein subunit.

It carries out the reaction Endonucleolytic cleavage of RNA, removing 5'-extranucleotides from tRNA precursor.. In terms of biological role, RNaseP catalyzes the removal of the 5'-leader sequence from pre-tRNA to produce the mature 5'-terminus. It can also cleave other RNA substrates such as 4.5S RNA. The protein component plays an auxiliary but essential role in vivo by binding to the 5'-leader sequence and broadening the substrate specificity of the ribozyme. In Chlorobium phaeobacteroides (strain DSM 266 / SMG 266 / 2430), this protein is Ribonuclease P protein component.